The sequence spans 269 residues: 3-methyl-2-oxobutanoate hydroxymethyltransferase (269 aa).

The Mg(2+) site is built by Asp-43 and Asp-82. Residues 43–44 (DS), Asp-82, and Lys-110 each bind 3-methyl-2-oxobutanoate. Glu-112 contacts Mg(2+). The Proton acceptor role is filled by Glu-179.

It belongs to the PanB family. As to quaternary structure, homodecamer; pentamer of dimers. Requires Mg(2+) as cofactor.

The protein localises to the cytoplasm. The enzyme catalyses 3-methyl-2-oxobutanoate + (6R)-5,10-methylene-5,6,7,8-tetrahydrofolate + H2O = 2-dehydropantoate + (6S)-5,6,7,8-tetrahydrofolate. Its pathway is cofactor biosynthesis; (R)-pantothenate biosynthesis; (R)-pantoate from 3-methyl-2-oxobutanoate: step 1/2. In terms of biological role, catalyzes the reversible reaction in which hydroxymethyl group from 5,10-methylenetetrahydrofolate is transferred onto alpha-ketoisovalerate to form ketopantoate. This chain is 3-methyl-2-oxobutanoate hydroxymethyltransferase, found in Acinetobacter baylyi (strain ATCC 33305 / BD413 / ADP1).